The chain runs to 177 residues: MEKEIMDAMAMKRALTRITYEIIERNKGVEDIVLIGIKTRGVFIAKRIAERLKQLENFDIPVGELDIAEYRDDQRNSAEPRSTKANSSLAKLDLKDRKVILIDDVLYTGRTIRAAMDAIMDINRPAQISLAVLVDRGHRELPIRADFVGKNIPTAQNEKINVFVREIDDEDVVLLEN.

Residues 99–111 carry the PRPP-binding motif; sequence VILIDDVLYTGRT.

Belongs to the purine/pyrimidine phosphoribosyltransferase family. PyrR subfamily. As to quaternary structure, homodimer and homohexamer; in equilibrium.

It carries out the reaction UMP + diphosphate = 5-phospho-alpha-D-ribose 1-diphosphate + uracil. Regulates transcriptional attenuation of the pyrimidine nucleotide (pyr) operon by binding in a uridine-dependent manner to specific sites on pyr mRNA. This disrupts an antiterminator hairpin in the RNA and favors formation of a downstream transcription terminator, leading to a reduced expression of downstream genes. Its function is as follows. Also displays a weak uracil phosphoribosyltransferase activity which is not physiologically significant. This Pediococcus pentosaceus (strain ATCC 25745 / CCUG 21536 / LMG 10740 / 183-1w) protein is Bifunctional protein PyrR.